Here is a 321-residue protein sequence, read N- to C-terminus: Malate dehydrogenase (321 aa).

NAD(+) is bound by residues 10-15 and D34; that span reads GSGMIG. 2 residues coordinate substrate: R83 and R89. NAD(+)-binding positions include N96 and 119–121; that span reads ITN. N121 and R152 together coordinate substrate. H176 functions as the Proton acceptor in the catalytic mechanism.

It belongs to the LDH/MDH superfamily. MDH type 3 family.

The catalysed reaction is (S)-malate + NAD(+) = oxaloacetate + NADH + H(+). In terms of biological role, catalyzes the reversible oxidation of malate to oxaloacetate. This Chelativorans sp. (strain BNC1) protein is Malate dehydrogenase.